A 425-amino-acid polypeptide reads, in one-letter code: Formyl-CoA:oxalate CoA-transferase (425 aa).

CoA contacts are provided by residues 17 to 18 (QS), R38, 72 to 75 (LDTK), 96 to 98 (NFG), R104, and 136 to 139 (KVYE). Residue D168 is the Nucleophile of the active site. Residue 247–249 (GGQ) coordinates substrate.

This sequence belongs to the CoA-transferase III family. Frc subfamily. Homodimer.

It catalyses the reaction formyl-CoA + oxalate = oxalyl-CoA + formate. It functions in the pathway metabolic intermediate degradation; oxalate degradation; CO(2) and formate from oxalate: step 1/2. Functionally, involved in the catabolism of oxalate and in the adapatation to low pH via the induction of the oxalate-dependent acid tolerance response (ATR). Catalyzes the transfer of the CoA moiety from formyl-CoA to oxalate. This chain is Formyl-CoA:oxalate CoA-transferase, found in Bradyrhizobium sp. (strain ORS 278).